A 166-amino-acid chain; its full sequence is Transcription factor HES-5 (166 aa).

Residues Lys16 to Ser72 form the bHLH domain. Positions Tyr88–Phe119 constitute an Orange domain. The disordered stretch occupies residues Pro125 to Trp166. Residues Ala142 to Arg156 are compositionally biased toward low complexity. Residues Trp163–Trp166 carry the WRPW motif motif.

Transcription repression requires formation of a complex with a corepressor protein of the Groucho/TLE family. Expressed predominantly in embryonic neural lineage cells.

It is found in the nucleus. In terms of biological role, transcriptional repressor of genes that require a bHLH protein for their transcription. Plays an important role as neurogenesis negative regulator. The polypeptide is Transcription factor HES-5 (Hes5) (Rattus norvegicus (Rat)).